We begin with the raw amino-acid sequence, 518 residues long: MEYEKMLYMPAASEMPHSPQLKPHQFQAHTPTDQYSSYADNFDLSLLPQESASIPTTVFQYNAPQIKVECAWDSQPIQQQQQPTAPYTNPSSHQLIPPPAYPHSAYPSPQSSPLQSEFAAYGLGRFGGSYDSLNSPSPSLEAVSIKQELHILPPSPPESNCETPSPRSSCGESIKAEPLDADIESLIDLNSLLQQQSLQSPQNLQDTKPDHQLLRECLEDTSFQKRHNLKPLALESFIGGLAEVRGDFEPVISLALEHAKREADAICAELQISQDPNGWSPAQVHAWLRSTLAQFRLPPVADLELHFCENGAALALLSEEEFVRRLPESGSTLHAQLEIWKMAYADQPAHQQHSQQSASTDHWPASYAMPHLDLDYNEDSEDDDDMEADAQVAPLNGSTTSPPATNASNGGTATVKRPNGGRTGGGGSHIHLWQFLKELLASPQVNGTAIRWIDRSKGIFKIEDSVRVAKLWGRRKNRPAMNYDKLSRSIRQYYKKGIMKKTERSQRLVYQFCHPYSQ.

Disordered regions lie at residues 74–113 (SQPI…QSSP) and 152–172 (LPPS…SCGE). Positions 84-94 (TAPYTNPSSHQ) are enriched in polar residues. Residues 102 to 113 (PHSAYPSPQSSP) show a composition bias toward low complexity. Polar residues predominate over residues 158–171 (ESNCETPSPRSSCG). Positions 258-344 (HAKREADAIC…AQLEIWKMAY (87 aa)) constitute a PNT domain. Residues 393 to 426 (APLNGSTTSPPATNASNGGTATVKRPNGGRTGGG) form a disordered region. Residues 396 to 412 (NGSTTSPPATNASNGGT) show a composition bias toward polar residues. Residues 430–513 (IHLWQFLKEL…RSQRLVYQFC (84 aa)) constitute a DNA-binding region (ETS).

This sequence belongs to the ETS family. In terms of tissue distribution, transient high expression in pole cells during embryonic stages 8-11.

The protein localises to the nucleus. May have a role in germline development. The polypeptide is DNA-binding protein D-ETS-4 (Ets98B) (Drosophila melanogaster (Fruit fly)).